We begin with the raw amino-acid sequence, 585 residues long: Cytochrome P450 monooxygenase AOL_s00215g278 (585 aa).

C518 is a binding site for heme.

The protein belongs to the cytochrome P450 family. The cofactor is heme.

The protein operates within secondary metabolite biosynthesis; terpenoid biosynthesis. In terms of biological role, cytochrome P450 monooxygenase; part of the gene cluster that mediates the biosynthesis of sesquiterpenyl epoxy-cyclohexenoids (SECs) such as anthrobotrisins and arthrosporols, metabolites that possess a novel hybrid carbon skeleton consisting of a polyketide-derived epoxycyclohexenol combined with a terpenoid-derived monocyclic sesquiterpenol substructure (PKS-PTS hybrid). The SEC pathway plays an important role for fungal soil colonization via decreasing fungal nematode-capturing ability. Within the pathway, the cytochrome P450 monooxygenase AOL_s00215g278 plays a role in the oxygenation of the phenol moiety, most likely in the epoxy formation. The pathway begins with the biosynthesis of 6-methylsalicylic acid (6-MSA), the first precursor of the polyketide-derived epoxycyclohexenol in arthrosporols, by the polyketide synthase (PKS) AOL_s00215g283 via condensation of 1 acetate and 3 malonate units. The 6-methylsalicylic acid decarboxylase AOL_s00215g281 then catalyzes the decarboxylation of 6-methylsalicylic acid to yield m-cresol. The cytochrome P450 monooxygenase AOL_s00215g282 further oxidizes m-cresol to yield toluquinol. With the assistance of the oxidoreductase AOL_s00215g277, the polyprenyl transferase AOL_s00215g276 catalyzes the farnesylation of toluquinol to produce farnesyl hydroquinone, the hybrid precursor for biosynthesis of SECs. Farnesyl hydroquinone undergoes epoxidation and then subsequent dehydrogenation to form farnesyl epoxy-quinone, the first and simplest SEC. The cytochrome P450 monooxygenase AOL_s00215g278 and the FAD-dependent monooxygenase AOL_s00215g279 might be involved in the oxygenation of the phenol moiety, most likely in the epoxy formation. The cytochrome P450 monooxygenases AOL_s00215g274 and AOL_s00215g280 are involved in specific regional ketone reductions at respectively C-4 and C-1 of farnesyl epoxy-quinone PubMed:33823587. This chain is Cytochrome P450 monooxygenase AOL_s00215g278, found in Arthrobotrys oligospora (strain ATCC 24927 / CBS 115.81 / DSM 1491) (Nematode-trapping fungus).